The primary structure comprises 71 residues: General transcription and DNA repair factor IIH subunit TFB5 (71 aa).

Belongs to the TFB5 family. Component of the 7-subunit TFIIH core complex.

It localises to the nucleus. The protein localises to the chromosome. Functionally, component of the general transcription and DNA repair factor IIH (TFIIH) core complex, which is involved in general and transcription-coupled nucleotide excision repair (NER) of damaged DNA and in RNA transcription by RNA polymerase II. In NER, TFIIH acts by opening DNA around the lesion to allow the excision of the damaged oligonucleotide and its replacement by a new DNA fragment. In transcription, TFIIH has an essential role in transcription initiation. When the pre-initiation complex (PIC) has been established, TFIIH is required for promoter opening and promoter escape. Necessary for the stability of the TFIIH complex and for the presence of normal levels of TFIIH in the cell. Required for efficient binding of TFIIH to damaged DNA. Dispensable for normal development, but required when transcription is challenged. This is General transcription and DNA repair factor IIH subunit TFB5 from Caenorhabditis elegans.